The sequence spans 168 residues: Photosystem I assembly protein Ycf3 (168 aa).

TPR repeat units follow at residues 35–68 (AFAY…EMDP), 72–105 (SYIL…NPFL), and 120–153 (GEQA…TPDN).

It belongs to the Ycf3 family.

Its subcellular location is the plastid membrane. In terms of biological role, essential for the assembly of the photosystem I (PSI) complex. May act as a chaperone-like factor to guide the assembly of the PSI subunits. This is Photosystem I assembly protein Ycf3 from Cuscuta obtusiflora (Peruvian dodder).